The sequence spans 75 residues: Small ribosomal subunit protein bS16 (75 aa).

This sequence belongs to the bacterial ribosomal protein bS16 family.

In Helicobacter pylori (strain G27), this protein is Small ribosomal subunit protein bS16.